Here is a 150-residue protein sequence, read N- to C-terminus: uncharacterized protein (150 aa).

Helical transmembrane passes span 12-30 (IVQRIISLLTIILLAYFLF), 40-62 (RLLSLATIVLLASFLFIIFLVLF), 74-96 (IRRTIAIVTTSFYFGTLSMVLSG), and 106-128 (ALIDGLKWAFMVVVAFYFGSRAV).

The protein resides in the cell membrane. This is an uncharacterized protein from Archaeoglobus fulgidus (strain ATCC 49558 / DSM 4304 / JCM 9628 / NBRC 100126 / VC-16).